We begin with the raw amino-acid sequence, 225 residues long: NAD(P)H-quinone oxidoreductase subunit K, chloroplastic (225 aa).

Positions 43, 44, 108, and 139 each coordinate [4Fe-4S] cluster.

This sequence belongs to the complex I 20 kDa subunit family. In terms of assembly, NDH is composed of at least 16 different subunits, 5 of which are encoded in the nucleus. It depends on [4Fe-4S] cluster as a cofactor.

It localises to the plastid. It is found in the chloroplast thylakoid membrane. The enzyme catalyses a plastoquinone + NADH + (n+1) H(+)(in) = a plastoquinol + NAD(+) + n H(+)(out). It carries out the reaction a plastoquinone + NADPH + (n+1) H(+)(in) = a plastoquinol + NADP(+) + n H(+)(out). Functionally, NDH shuttles electrons from NAD(P)H:plastoquinone, via FMN and iron-sulfur (Fe-S) centers, to quinones in the photosynthetic chain and possibly in a chloroplast respiratory chain. The immediate electron acceptor for the enzyme in this species is believed to be plastoquinone. Couples the redox reaction to proton translocation, and thus conserves the redox energy in a proton gradient. The sequence is that of NAD(P)H-quinone oxidoreductase subunit K, chloroplastic from Crucihimalaya wallichii (Rock-cress).